We begin with the raw amino-acid sequence, 198 residues long: MSFLKKSLLLILFLGLVSLSVCKEEKRVSEEENENEENHEEGSEMKRYAFGYPSGEAKKIKRESEEEKEIEENHEEGSEMKRYAFGYPSGEAKKIKRESEEENENEENHEEGSEMKRYAFGYPSGEAKKIKRESEEEKEIEENHEEGSEMKRYAFGYPSGEAKKIKRESEEENENEENHEEGSEMKRYAFGYPSGEAK.

The N-terminal stretch at 1-20 is a signal peptide; it reads MSFLKKSLLLILFLGLVSLS. The propeptide occupies 21–45; sequence VCKEEKRVSEEENENEENHEEGSEM. The disordered stretch occupies residues 24-198; the sequence is EEKRVSEEEN…AFGYPSGEAK (175 aa). Alanine 49 carries the post-translational modification D-alanine (Ala). A Serine amide modification is found at serine 54. Residues 56–65 show a composition bias toward basic and acidic residues; that stretch reads EAKKIKRESE. A propeptide spanning residues 56-80 is cleaved from the precursor; that stretch reads EAKKIKRESEEEKEIEENHEEGSEM. Alanine 84 carries the post-translational modification D-alanine (Ala). Serine 89 carries the post-translational modification Serine amide. Positions 91 to 115 are excised as a propeptide; the sequence is EAKKIKRESEEENENEENHEEGSEM. Over residues 100-109 the composition is skewed to acidic residues; that stretch reads EEENENEENH. The residue at position 119 (alanine 119) is a D-alanine (Ala). Serine 124 bears the Serine amide mark. Positions 126-135 are enriched in basic and acidic residues; sequence EAKKIKRESE. A propeptide spanning residues 126 to 150 is cleaved from the precursor; it reads EAKKIKRESEEEKEIEENHEEGSEM. A D-alanine (Ala) modification is found at alanine 154. Serine amide is present on serine 159. The propeptide occupies 161–185; that stretch reads EAKKIKRESEEENENEENHEEGSEM. Positions 170–179 are enriched in acidic residues; sequence EEENENEENH. The residue at position 189 (alanine 189) is a D-alanine (Ala). A Serine amide modification is found at serine 194. Residues 196–198 constitute a propeptide that is removed on maturation; the sequence is EAK.

The protein belongs to the frog skin active peptide (FSAP) family. Dermorphin subfamily. In terms of tissue distribution, expressed by the skin glands.

It localises to the secreted. Its function is as follows. Dermorphin has a very potent opiate-like activity. It has high affinity and selectivity for mu-type opioid receptors. The polypeptide is Dermorphin-2 (Phyllomedusa sauvagei (Sauvage's leaf frog)).